The primary structure comprises 440 residues: Ribosomal protein uS12 methylthiotransferase RimO (440 aa).

Residues 5–116 (PTIAISHLGC…IVSVIERAEQ (112 aa)) enclose the MTTase N-terminal domain. Residues C14, C50, C79, C154, C158, and C161 each contribute to the [4Fe-4S] cluster site. One can recognise a Radical SAM core domain in the interval 140-370 (TTTEGVAYLR…ALQQPISWRK (231 aa)). A TRAM domain is found at 372–438 (QQEVGKTVEV…EYDLFGQVVS (67 aa)).

This sequence belongs to the methylthiotransferase family. RimO subfamily. Requires [4Fe-4S] cluster as cofactor.

It is found in the cytoplasm. It catalyses the reaction L-aspartate(89)-[ribosomal protein uS12]-hydrogen + (sulfur carrier)-SH + AH2 + 2 S-adenosyl-L-methionine = 3-methylsulfanyl-L-aspartate(89)-[ribosomal protein uS12]-hydrogen + (sulfur carrier)-H + 5'-deoxyadenosine + L-methionine + A + S-adenosyl-L-homocysteine + 2 H(+). Functionally, catalyzes the methylthiolation of an aspartic acid residue of ribosomal protein uS12. The polypeptide is Ribosomal protein uS12 methylthiotransferase RimO (Nostoc sp. (strain PCC 7120 / SAG 25.82 / UTEX 2576)).